A 120-amino-acid polypeptide reads, in one-letter code: PE family protein PE10 (120 aa).

A disordered region spans residues 29-59 (GQVTGNGGSGNSGTSAAAANPNSDNTASIAD). The span at 40–51 (SGTSAAAANPNS) shows a compositional bias: low complexity.

It belongs to the mycobacterial PE family. In terms of assembly, forms a complex with PE9. The complex interacts with human TLR4.

The protein localises to the secreted. The protein resides in the cell wall. Its function is as follows. Together with PE9, induces macrophage apoptosis through human Toll-like receptor 4 (TLR4) signaling pathway. Interaction with TLR4 leads to increased levels of phospho-IRF-3, increase in the transcript levels of IFN-beta and pro-apoptotic genes, up-regulation of IL-10, down-regulation of IL-1b and enhanced levels of macrophage apoptosis. This is PE family protein PE10 from Mycobacterium tuberculosis (strain ATCC 25618 / H37Rv).